We begin with the raw amino-acid sequence, 479 residues long: MMLFLIHLMALCCMFVAEVACEQFNSTSNSSSAQSSLIDFQYKGVSIGGWLVLEPYITPSLFNATLSSGETWTDLPVDEYHFCEKLGAKEAEKRLTDHWESMYNETDFKQIKEAGLNMVRIPIGYWSFEKLEGDPYVSGAQDYLDKAIEWSHANDLKVMIDLHGAPNTQNGFDNSGLRNLGYPGWQNKTEYVNHTYKVLQQMFQKYGTGKYASDYKNTIIGIEVLNEPLNPNMDKLKEFYIESYNDGREIQVINNTIFFQEAFQPIGYWDSFLEKGEIKVTETSNGTNHTTTKKADFKNIIIDHHHYEVFTESQVASNVSTHLENIKNYASAIGKEKAKAIVGEWSAALTDCAPWLNGVGLGSRYEGTAPYTNDRVGSCAEFNKSPDKWSKKQKKDYRRFVEMQLYEYSTNSQGWIFWCWKTEGATEWDFRALVKNGIMPQPLDNYKYVKNGTDTSSASAIASNKMTLLLAFLLVILVI.

A signal peptide spans 1–21; it reads MMLFLIHLMALCCMFVAEVAC. N-linked (GlcNAc...) asparagine glycans are attached at residues Asn25, Asn29, Asn63, Asn104, Asn187, and Asn193. Residue Glu227 is the Proton donor of the active site. N-linked (GlcNAc...) asparagine glycans are attached at residues Asn254, Asn285, and Asn288. His306 acts as the Nucleophile in catalysis. 2 N-linked (GlcNAc...) asparagine glycosylation sites follow: Asn318 and Asn451. A lipid anchor (GPI-anchor amidated serine) is attached at Ser456. The propeptide at 457-479 is removed in mature form; the sequence is SASAIASNKMTLLLAFLLVILVI.

The protein belongs to the glycosyl hydrolase 5 (cellulase A) family. In terms of processing, predicted to be a substrate for cleavage by KEX2.

The protein localises to the cell membrane. It is found in the secreted. The catalysed reaction is Successive hydrolysis of beta-D-glucose units from the non-reducing ends of (1-&gt;3)-beta-D-glucans, releasing alpha-glucose.. Beta-glucanases participate in the metabolism of beta-glucan, the main structural component of the cell wall. EXG2 is not heavily involved in the exoglucanase function of the adhesion process. This Candida albicans (strain SC5314 / ATCC MYA-2876) (Yeast) protein is Glucan 1,3-beta-glucosidase 2 (EXG2).